A 470-amino-acid polypeptide reads, in one-letter code: Proton-coupled amino acid transporter 3 (470 aa).

The Cytoplasmic portion of the chain corresponds to methionine 1–glutamine 46. A compositionally biased stretch (polar residues) spans serine 10 to glutamine 20. Residues serine 10 to asparagine 33 form a disordered region. Residues serine 21–serine 31 show a composition bias toward low complexity. The chain crosses the membrane as a helical span at residues threonine 47–isoleucine 67. Residues lysine 68 to glycine 71 are Extracellular-facing. The helical transmembrane segment at leucine 72–isoleucine 92 threads the bilayer. At leucine 93–threonine 137 the chain is on the cytoplasmic side. The chain crosses the membrane as a helical span at residues valine 138–alanine 158. Residues aspartate 159–proline 185 are Extracellular-facing. The chain crosses the membrane as a helical span at residues isoleucine 186–isoleucine 206. Over glutamine 207–lysine 210 the chain is Cytoplasmic. The chain crosses the membrane as a helical span at residues valine 211–phenylalanine 231. Over glutamate 232–threonine 252 the chain is Extracellular. Residues phenylalanine 253–leucine 273 traverse the membrane as a helical segment. The Cytoplasmic portion of the chain corresponds to lysine 274–serine 284. The chain crosses the membrane as a helical span at residues phenylalanine 285–glycine 305. The Extracellular segment spans residues tyrosine 306–glycine 337. A helical membrane pass occupies residues isoleucine 338–isoleucine 358. Residues serine 359 to leucine 367 lie on the Cytoplasmic side of the membrane. A helical membrane pass occupies residues phenylalanine 368–isoleucine 388. Over proline 389–aspartate 392 the chain is Extracellular. The helical transmembrane segment at leucine 393 to leucine 413 threads the bilayer. Over leucine 414–serine 425 the chain is Cytoplasmic. Residues cysteine 426–glycine 446 form a helical membrane-spanning segment. Over threonine 447–alanine 470 the chain is Extracellular.

Belongs to the amino acid/polyamine transporter 2 family. In terms of tissue distribution, specifically expressed in testis.

The protein resides in the membrane. In Homo sapiens (Human), this protein is Proton-coupled amino acid transporter 3 (SLC36A3).